Here is a 508-residue protein sequence, read N- to C-terminus: Photosystem II CP47 reaction center protein (508 aa).

Transmembrane regions (helical) follow at residues 21-36, 101-115, 140-156, 203-218, 237-252, and 457-472; these read SVHI…WAGS, IVFS…IWHW, GIHL…FGAF, IAAG…FHLS, VLSS…AFVV, and SFAL…HGSR.

Belongs to the PsbB/PsbC family. PsbB subfamily. In terms of assembly, PSII is composed of 1 copy each of membrane proteins PsbA, PsbB, PsbC, PsbD, PsbE, PsbF, PsbH, PsbI, PsbJ, PsbK, PsbL, PsbM, PsbT, PsbX, PsbY, PsbZ, Psb30/Ycf12, at least 3 peripheral proteins of the oxygen-evolving complex and a large number of cofactors. It forms dimeric complexes. The cofactor is Binds multiple chlorophylls. PSII binds additional chlorophylls, carotenoids and specific lipids..

It is found in the plastid. The protein resides in the chloroplast thylakoid membrane. Its function is as follows. One of the components of the core complex of photosystem II (PSII). It binds chlorophyll and helps catalyze the primary light-induced photochemical processes of PSII. PSII is a light-driven water:plastoquinone oxidoreductase, using light energy to abstract electrons from H(2)O, generating O(2) and a proton gradient subsequently used for ATP formation. This chain is Photosystem II CP47 reaction center protein, found in Fagopyrum esculentum subsp. ancestrale (Wild buckwheat).